Consider the following 342-residue polypeptide: C-X-C chemokine receptor type 6 (342 aa).

Residues 1–32 (MAEHDYHEDYGLNSFNDSSQEEHQDFLQFRKV) are Extracellular-facing. A glycan (N-linked (GlcNAc...) asparagine) is linked at Asn16. Residues 33–59 (FLPCMYLVVFVCGLVGNSLVLVISIFY) traverse the membrane as a helical segment. At 60 to 68 (HKLQSLTDV) the chain is on the cytoplasmic side. A helical transmembrane segment spans residues 69–89 (FLVNLPLADLVFVCTLPFWAY). Residues 90–103 (AGIHEWIFGQVMCK) lie on the Extracellular side of the membrane. Cys102 and Cys180 are joined by a disulfide. A helical transmembrane segment spans residues 104–125 (TLLGVYTINFYTSMLILTCITV). The Cytoplasmic portion of the chain corresponds to 126 to 143 (DRFIVVVKATKAYNQQAK). The chain crosses the membrane as a helical span at residues 144–164 (RMTWGKVICLLIWVISLLVSL). Residues 165 to 187 (PQIIYGNVFNLDKLICGYHDKEI) are Extracellular-facing. Residues 188–215 (STVVLATQMTLGFFLPLLAMIVCYSVII) traverse the membrane as a helical segment. The Cytoplasmic portion of the chain corresponds to 216–231 (KTLLHAGGFQKHRSLK). Residues 232–259 (IIFLVMAVFLLTQTPFNLVKLIRSTHWE) form a helical membrane-spanning segment. Topologically, residues 260–275 (YYAMTSFHYTIIVTEA) are extracellular. A helical transmembrane segment spans residues 276–293 (IAYLRACLNPVLYAFVSL). At 294–342 (KFRKNFWKLVKDIGCLPYLGVSHQWKSSEDNSKTFSASHNVEATSMFQL) the chain is on the cytoplasmic side.

This sequence belongs to the G-protein coupled receptor 1 family.

The protein localises to the cell membrane. In terms of biological role, receptor for the C-X-C chemokine CXCL16. Used as a coreceptor by SIVs and by strains of HIV-2 and m-tropic HIV-1. The chain is C-X-C chemokine receptor type 6 (CXCR6) from Macaca nemestrina (Pig-tailed macaque).